The chain runs to 24 residues: Heptapoietin A light chain (24 aa).

Heterodimer of a heavy and a light chain linked by disulfide bond(s).

Its function is as follows. HPTA is an acidic heparin-binding growth factor for hepatocytes. The sequence is that of Heptapoietin A light chain from Oryctolagus cuniculus (Rabbit).